An 839-amino-acid polypeptide reads, in one-letter code: MVNFTIDQIRAIMDRRENIRNMSVIAHVDHGKTTLSDSLIQRAGIIADKVSGDMRYMSCRADEQERGITIKSSSVSLHFEMPKEDKLPAGCTSHEFLINLIDSPGHVDFSSEVTAALRVTDGALVVIDCVEGVCVQTETVLRQAVAERIKPVLFVNKVDRFLLELQLNTEEAYLSFRRAIESVNVIVGNTEDKEFGDVTVSPEKGTVAFGSGLHGWGFTLGRFAKLYAAKFGVPEDKLMGRLWGDSYFDATAKKWTSNPQSADGKALPRAFCQFVLEPIYQLTRAIVDEDAVKLEKMMKTLQITLAPEDAEIKGKQLVKAVMRKFLPAADAILSMIVTHLPSPLVAQKYRCANLYEGPMDDECAVAIQKCDPNGPLMMYVSKMVPTSDKGRFYAFGRVFSGIIRTGQKVRIMGVNYVPGKKDDLFLKSIQRTVLMMGRKTEQIEDCPCGNIVGLVGVDQFLVKSGTITTSEVAHNIRVMKFSVSPVVRVAVEPKNPSDLPKLVEGLKRLAKSDPCVLCYSEESGEHIVAGAGELHLEICLKDLAEDHAGIEIKTTDPVVSFRESVSEESSIMCLSKSPNKHNRLFMKASPISMELQDLIEAGSDISSKDDPKARANYLADNHEWDKNDAMNIWSFGPEGNGANLLVNVTKGVQYLNEIKDSFVGAFQWATKEGVVCDENMRGIRFNLYDVTLHTDAIHRGGGQIIPTARRVLYAAELTASPTLLEPIYLVEITAPENAIGGIYSVLNRRRGIVIGEERRIGSPLFSVKAHLPVLESFGFTADLRSHTAGQAFPQCVFDHWASIGVVNKDKKATEVALATRKRKGLAPEIPDLDKFHEKL.

The tr-type G domain occupies Glu-17 to Phe-248. Residues Ala-26 to Thr-33, Asn-156 to Asp-159, and Ser-211 to Leu-213 each bind GTP. Diphthamide is present on His-698.

Belongs to the TRAFAC class translation factor GTPase superfamily. Classic translation factor GTPase family. EF-G/EF-2 subfamily. Phosphorylation by EF-2 kinase completely inactivates EF-2.

The protein resides in the cytoplasm. It catalyses the reaction GTP + H2O = GDP + phosphate + H(+). Functionally, catalyzes the GTP-dependent ribosomal translocation step during translation elongation. During this step, the ribosome changes from the pre-translocational (PRE) to the post-translocational (POST) state as the newly formed A-site-bound peptidyl-tRNA and P-site-bound deacylated tRNA move to the P and E sites, respectively. Catalyzes the coordinated movement of the two tRNA molecules, the mRNA and conformational changes in the ribosome. This Dictyostelium discoideum (Social amoeba) protein is Elongation factor 2 (efbA).